Here is a 665-residue protein sequence, read N- to C-terminus: RNA-directed RNA polymerase (665 aa).

The RdRp catalytic domain occupies 310–485 (NKEEKVKEWS…LKEGKVNPSP (176 aa)). Residues aspartate 454, tyrosine 491, and glycine 495 each coordinate Mg(2+).

In terms of assembly, part of the packaging complex composed of RDRP, P4 and P7. Interacts with P7. Mg(2+) is required as a cofactor. The cofactor is Mn(2+).

The protein localises to the virion. It carries out the reaction RNA(n) + a ribonucleoside 5'-triphosphate = RNA(n+1) + diphosphate. Its function is as follows. Rna-dependent RNA polymerase part of the packaging complex that packages the viral RNA segments, replicate them into a double-stranded form and transcribe them. In Pseudomonas phage phi6 (Bacteriophage phi-6), this protein is RNA-directed RNA polymerase (P2).